A 158-amino-acid chain; its full sequence is Phosphopantetheine adenylyltransferase (158 aa).

Thr-10 contributes to the substrate binding site. ATP-binding positions include 10 to 11 (TF) and His-18. Substrate contacts are provided by Lys-42, Leu-74, and Arg-88. ATP-binding positions include 89–91 (GIR), Glu-99, and 124–130 (WRYLSST).

This sequence belongs to the bacterial CoaD family. As to quaternary structure, homohexamer. Requires Mg(2+) as cofactor.

It is found in the cytoplasm. The enzyme catalyses (R)-4'-phosphopantetheine + ATP + H(+) = 3'-dephospho-CoA + diphosphate. The protein operates within cofactor biosynthesis; coenzyme A biosynthesis; CoA from (R)-pantothenate: step 4/5. Functionally, reversibly transfers an adenylyl group from ATP to 4'-phosphopantetheine, yielding dephospho-CoA (dPCoA) and pyrophosphate. In Actinobacillus pleuropneumoniae serotype 3 (strain JL03), this protein is Phosphopantetheine adenylyltransferase.